Consider the following 432-residue polypeptide: Glutamyl-tRNA reductase (432 aa).

Residues threonine 55–arginine 58, serine 114, glutamate 119–glutamine 121, and glutamine 125 each bind substrate. Cysteine 56 acts as the Nucleophile in catalysis. Glycine 194–isoleucine 199 is an NADP(+) binding site.

It belongs to the glutamyl-tRNA reductase family. In terms of assembly, homodimer.

It catalyses the reaction (S)-4-amino-5-oxopentanoate + tRNA(Glu) + NADP(+) = L-glutamyl-tRNA(Glu) + NADPH + H(+). Its pathway is porphyrin-containing compound metabolism; protoporphyrin-IX biosynthesis; 5-aminolevulinate from L-glutamyl-tRNA(Glu): step 1/2. Functionally, catalyzes the NADPH-dependent reduction of glutamyl-tRNA(Glu) to glutamate 1-semialdehyde (GSA). This chain is Glutamyl-tRNA reductase, found in Burkholderia ambifaria (strain ATCC BAA-244 / DSM 16087 / CCUG 44356 / LMG 19182 / AMMD) (Burkholderia cepacia (strain AMMD)).